We begin with the raw amino-acid sequence, 338 residues long: Phenylalanine--tRNA ligase alpha subunit (338 aa).

Glu253 contributes to the Mg(2+) binding site.

It belongs to the class-II aminoacyl-tRNA synthetase family. Phe-tRNA synthetase alpha subunit type 1 subfamily. As to quaternary structure, tetramer of two alpha and two beta subunits. Requires Mg(2+) as cofactor.

The protein localises to the cytoplasm. The catalysed reaction is tRNA(Phe) + L-phenylalanine + ATP = L-phenylalanyl-tRNA(Phe) + AMP + diphosphate + H(+). The chain is Phenylalanine--tRNA ligase alpha subunit from Syntrophotalea carbinolica (strain DSM 2380 / NBRC 103641 / GraBd1) (Pelobacter carbinolicus).